A 347-amino-acid polypeptide reads, in one-letter code: NADH-ubiquinone oxidoreductase chain 2 (347 aa).

Transmembrane regions (helical) follow at residues 3-23 (PPIL…VMLS), 25-45 (HWLL…PVLM), 66-86 (ASML…QWVV), 96-116 (IMMT…FWVP), 122-142 (ITLT…MSVL), 149-169 (INTN…GWGG), 178-198 (IMAY…IYNP), 201-221 (MILN…LFML), 237-257 (FPLI…LPPL), 274-294 (NMII…YFYL), and 323-343 (TILL…TPML).

It belongs to the complex I subunit 2 family. Core subunit of respiratory chain NADH dehydrogenase (Complex I) which is composed of 45 different subunits. Interacts with TMEM242.

The protein localises to the mitochondrion inner membrane. The enzyme catalyses a ubiquinone + NADH + 5 H(+)(in) = a ubiquinol + NAD(+) + 4 H(+)(out). Functionally, core subunit of the mitochondrial membrane respiratory chain NADH dehydrogenase (Complex I) which catalyzes electron transfer from NADH through the respiratory chain, using ubiquinone as an electron acceptor. Essential for the catalytic activity and assembly of complex I. This Canis rufus (Red wolf) protein is NADH-ubiquinone oxidoreductase chain 2.